The primary structure comprises 263 residues: MKPTTIALLQKCKQEKKRFATITAYDHSFAKLFADEGINVLLVGDSLGMTVQGHDSTLPVTVEDIAYHTRAVRRGAPNSLLLADLPFMAYATPEQTFENAAIVMRAGANMVKLEGGAWLADTVKMLAERAVPVCGHLGLTPQSVNVFGGYKVQGRGDAAQTLFDDALALEAAGAQLLVLECVPVELAKRITDALTIPVIGIGAGNVTDGQILVMHDAFGITGGHIPKFAKNFLAEAGDIRAAVRQYIAEVESGVYPGEEHSFH.

The Mg(2+) site is built by D45 and D84. 3-methyl-2-oxobutanoate contacts are provided by residues 45–46 (DS), D84, and K112. E114 is a Mg(2+) binding site. Residue E180 is the Proton acceptor of the active site.

This sequence belongs to the PanB family. In terms of assembly, homodecamer; pentamer of dimers. The cofactor is Mg(2+).

Its subcellular location is the cytoplasm. It catalyses the reaction 3-methyl-2-oxobutanoate + (6R)-5,10-methylene-5,6,7,8-tetrahydrofolate + H2O = 2-dehydropantoate + (6S)-5,6,7,8-tetrahydrofolate. It functions in the pathway cofactor biosynthesis; (R)-pantothenate biosynthesis; (R)-pantoate from 3-methyl-2-oxobutanoate: step 1/2. Functionally, catalyzes the reversible reaction in which hydroxymethyl group from 5,10-methylenetetrahydrofolate is transferred onto alpha-ketoisovalerate to form ketopantoate. The chain is 3-methyl-2-oxobutanoate hydroxymethyltransferase from Klebsiella pneumoniae (strain 342).